Here is a 188-residue protein sequence, read N- to C-terminus: Elongation factor P (188 aa).

Belongs to the elongation factor P family.

It is found in the cytoplasm. It participates in protein biosynthesis; polypeptide chain elongation. Involved in peptide bond synthesis. Stimulates efficient translation and peptide-bond synthesis on native or reconstituted 70S ribosomes in vitro. Probably functions indirectly by altering the affinity of the ribosome for aminoacyl-tRNA, thus increasing their reactivity as acceptors for peptidyl transferase. The chain is Elongation factor P from Chloroherpeton thalassium (strain ATCC 35110 / GB-78).